The following is a 434-amino-acid chain: Glycylpeptide N-tetradecanoyltransferase 1 (434 aa).

Positions 1–24 (MADNNSPPGSVEQKADQIVEANPL) are disordered. Ala-2 is modified (N-acetylalanine). Tetradecanoyl-CoA is bound by residues 48–51 (HKFW), 184–186 (LCV), and 192–196 (SKRLA). The Proton acceptor; via carboxylate role is filled by Leu-434.

This sequence belongs to the NMT family. Expressed ubiquitously, with higher levels in young tissues (at protein level).

Its subcellular location is the cytoplasm. It catalyses the reaction N-terminal glycyl-[protein] + tetradecanoyl-CoA = N-tetradecanoylglycyl-[protein] + CoA + H(+). In terms of biological role, adds a myristoyl group to the N-terminal glycine residue of certain cellular proteins. Can also use decanoyl-CoA and lauroyl-CoA as substrates. This Arabidopsis thaliana (Mouse-ear cress) protein is Glycylpeptide N-tetradecanoyltransferase 1 (NMT1).